The primary structure comprises 186 residues: Ribosome-recycling factor (186 aa).

This sequence belongs to the RRF family.

It is found in the cytoplasm. Functionally, responsible for the release of ribosomes from messenger RNA at the termination of protein biosynthesis. May increase the efficiency of translation by recycling ribosomes from one round of translation to another. In Porphyromonas gingivalis (strain ATCC BAA-308 / W83), this protein is Ribosome-recycling factor.